A 142-amino-acid chain; its full sequence is Protein spalt-accessory (142 aa).

The signal sequence occupies residues 1–16; it reads MKLLIALFVLVNAVIA. Residues 65-77 show a composition bias toward gly residues; the sequence is GQGGVSPGQGGFA. A disordered region spans residues 65–142; it reads GQGGVSPGQG…HHEHHGHHRH (78 aa). Residues 112-124 show a composition bias toward basic and acidic residues; it reads NHHEYPEHHGDHH. The span at 125-142 shows a compositional bias: basic residues; that stretch reads REHHEHHGHHEHHGHHRH.

The protein resides in the secreted. In terms of biological role, likely to be involved in the establishment of the head. The protein is Protein spalt-accessory (sala) of Drosophila orena (Fruit fly).